The sequence spans 224 residues: Orotidine 5'-phosphate decarboxylase (224 aa).

Residues Asp10, Lys32, 59-68 (DLKLHDIPNT), Thr115, Arg175, Gln184, Gly204, and Arg205 each bind substrate. The active-site Proton donor is the Lys61.

Belongs to the OMP decarboxylase family. Type 1 subfamily. As to quaternary structure, homodimer.

It catalyses the reaction orotidine 5'-phosphate + H(+) = UMP + CO2. It participates in pyrimidine metabolism; UMP biosynthesis via de novo pathway; UMP from orotate: step 2/2. Catalyzes the decarboxylation of orotidine 5'-monophosphate (OMP) to uridine 5'-monophosphate (UMP). In Erythrobacter litoralis (strain HTCC2594), this protein is Orotidine 5'-phosphate decarboxylase.